Consider the following 102-residue polypeptide: Large ribosomal subunit protein bL21 (102 aa).

Belongs to the bacterial ribosomal protein bL21 family. Part of the 50S ribosomal subunit. Contacts protein L20.

Its function is as follows. This protein binds to 23S rRNA in the presence of protein L20. This chain is Large ribosomal subunit protein bL21, found in Sulfurimonas denitrificans (strain ATCC 33889 / DSM 1251) (Thiomicrospira denitrificans (strain ATCC 33889 / DSM 1251)).